Consider the following 122-residue polypeptide: MARIAGVDLPREKRVEIGLTYIYGIGRVSADRILEAANVDPSTRVRDLTDDEVKRISAVIDETMTVEGDLRREIALNIKRLQEIGCYRGIRHRKGLPVRGQKTKTNARTRKGPKRTVANKKK.

A disordered region spans residues 95–122 (GLPVRGQKTKTNARTRKGPKRTVANKKK).

Belongs to the universal ribosomal protein uS13 family. In terms of assembly, part of the 30S ribosomal subunit. Forms a loose heterodimer with protein S19. Forms two bridges to the 50S subunit in the 70S ribosome.

Its function is as follows. Located at the top of the head of the 30S subunit, it contacts several helices of the 16S rRNA. In the 70S ribosome it contacts the 23S rRNA (bridge B1a) and protein L5 of the 50S subunit (bridge B1b), connecting the 2 subunits; these bridges are implicated in subunit movement. Contacts the tRNAs in the A and P-sites. In Agathobacter rectalis (strain ATCC 33656 / DSM 3377 / JCM 17463 / KCTC 5835 / VPI 0990) (Eubacterium rectale), this protein is Small ribosomal subunit protein uS13.